Reading from the N-terminus, the 77-residue chain is Acyl carrier protein (77 aa).

Residues 1-76 form the Carrier domain; the sequence is MATFDDVKAV…DVVNYIDNLK (76 aa). Ser-36 carries the O-(pantetheine 4'-phosphoryl)serine modification.

This sequence belongs to the acyl carrier protein (ACP) family. 4'-phosphopantetheine is transferred from CoA to a specific serine of apo-ACP by AcpS. This modification is essential for activity because fatty acids are bound in thioester linkage to the sulfhydryl of the prosthetic group.

The protein localises to the cytoplasm. The protein operates within lipid metabolism; fatty acid biosynthesis. In terms of biological role, carrier of the growing fatty acid chain in fatty acid biosynthesis. This is Acyl carrier protein from Campylobacter jejuni subsp. doylei (strain ATCC BAA-1458 / RM4099 / 269.97).